We begin with the raw amino-acid sequence, 50 residues long: Photosystem II reaction center protein M (50 aa).

A helical membrane pass occupies residues G7–I27. Positions D31–S50 are disordered.

The protein belongs to the PsbM family. As to quaternary structure, PSII is composed of 1 copy each of membrane proteins PsbA, PsbB, PsbC, PsbD, PsbE, PsbF, PsbH, PsbI, PsbJ, PsbK, PsbL, PsbM, PsbT, PsbX, PsbY, Psb30/Ycf12, peripheral proteins PsbO, CyanoQ (PsbQ), PsbU, PsbV and a large number of cofactors. It forms dimeric complexes.

Its subcellular location is the cellular thylakoid membrane. One of the components of the core complex of photosystem II (PSII). PSII is a light-driven water:plastoquinone oxidoreductase that uses light energy to abstract electrons from H(2)O, generating O(2) and a proton gradient subsequently used for ATP formation. It consists of a core antenna complex that captures photons, and an electron transfer chain that converts photonic excitation into a charge separation. This subunit is found at the monomer-monomer interface. The sequence is that of Photosystem II reaction center protein M from Prochlorococcus marinus (strain SARG / CCMP1375 / SS120).